The primary structure comprises 779 residues: Mesenchyme-specific cell surface glycoprotein (779 aa).

Positions 1-15 are cleaved as a signal peptide; sequence MQFGVPLLVLCLALG. 2 N-linked (GlcNAc...) asparagine glycosylation sites follow: N203 and N234. The interval 249–363 is disordered; the sequence is AGFPRGTTWS…QYPMIPTTPL (115 aa). Gly residues predominate over residues 262 to 351; the sequence is GAGGQGGQGQ…GGQGGQGGGN (90 aa). Residues N369, N451, and N609 are each glycosylated (N-linked (GlcNAc...) asparagine).

In terms of tissue distribution, restricted to the primary mesenchyme cell lineage.

Its subcellular location is the cell membrane. Functionally, not known. Could be involved in mesenchyme cell migration, adhesion, fusion, or spicule formation. This chain is Mesenchyme-specific cell surface glycoprotein, found in Strongylocentrotus purpuratus (Purple sea urchin).